Reading from the N-terminus, the 369-residue chain is MRKRISAIINKLNISIIIMTVVLMIGCGQQPEAGKTGVSGGVNGNLGNSLMELGRSAENAFYAFIELVSDVLGFTAKSDTTKQEVGGYFNSLGAKLGEASNDLEQVAVKAETGVDKSDSSKNPIREAVNEAKEVLGTLKGYVESLGTIGDSNPVGYANNAAGSGTTAADDELRKAFKALQEIVKAATDAGVKALKIGATTLQANGGADNKEGAKILATSGGNPAAADVAKAAAILSSVSGEEMLSSIVKSGENDAQLAAAADGNTSAISFAKGGSDAHLAGANTPKAAAVAGGIALRSLVKTGKLAAGAADNATGGGKEVQGVGVAAANKLLRAVEDVIKKTVKNVLEKAKEKIDKARGSQEPVSESSK.

An N-terminal signal peptide occupies residues 1-26 (MRKRISAIINKLNISIIIMTVVLMIG). The N-palmitoyl cysteine moiety is linked to residue Cys27. Cys27 carries the S-diacylglycerol cysteine lipid modification.

This sequence belongs to the variable large protein (Vlp) family. Alpha subfamily.

It localises to the cell outer membrane. The Vlp and Vsp proteins are antigenically distinct proteins, only one vlp or vsp gene is transcriptionally active at any one time. Switching between these genes is a mechanism of host immune response evasion. In Borrelia hermsii, this protein is Variable large protein 7.